A 102-amino-acid polypeptide reads, in one-letter code: Small ribosomal subunit protein uS10 (102 aa).

The protein belongs to the universal ribosomal protein uS10 family. In terms of assembly, part of the 30S ribosomal subunit.

In terms of biological role, involved in the binding of tRNA to the ribosomes. This chain is Small ribosomal subunit protein uS10, found in Methanoculleus marisnigri (strain ATCC 35101 / DSM 1498 / JR1).